A 116-amino-acid chain; its full sequence is Probable prefoldin subunit 2 (116 aa).

Belongs to the prefoldin subunit beta family. In terms of assembly, heterohexamer of two PFD-alpha type and four PFD-beta type subunits.

Its function is as follows. Binds specifically to cytosolic chaperonin (c-CPN) and transfers target proteins to it. Binds to nascent polypeptide chain and promotes folding in an environment in which there are many competing pathways for nonnative proteins. The protein is Probable prefoldin subunit 2 (pfdn2) of Dictyostelium discoideum (Social amoeba).